Here is a 216-residue protein sequence, read N- to C-terminus: Outer-membrane lipoprotein LolB (216 aa).

The first 21 residues, Met1–Ala21, serve as a signal peptide directing secretion. The N-palmitoyl cysteine moiety is linked to residue Cys22. Cys22 is lipidated: S-diacylglycerol cysteine.

It belongs to the LolB family. In terms of assembly, monomer.

It localises to the cell outer membrane. In terms of biological role, plays a critical role in the incorporation of lipoproteins in the outer membrane after they are released by the LolA protein. This chain is Outer-membrane lipoprotein LolB, found in Hamiltonella defensa subsp. Acyrthosiphon pisum (strain 5AT).